The following is a 777-amino-acid chain: Serine/threonine-protein kinase PLK4 (777 aa).

Positions 14-268 (YEVQHLLGKG…LEQVLRHPFL (255 aa)) constitute a Protein kinase domain. ATP is bound by residues 20–28 (LGKGGFASV) and Lys43. The active-site Proton acceptor is Asp139. A compositionally biased stretch (polar residues) spans 371 to 381 (TNNLAPFTSDS). The interval 371 to 390 (TNNLAPFTSDSDMIPSPVGE) is disordered. The 118-residue stretch at 390–507 (EKRLLMPPLE…ARFVGLVKSK (118 aa)) folds into the Cryptic POLO box 1 (CPB1) domain. Residues 508–611 (TPKITFFSSL…GRRPAADMHA (104 aa)) form the Cryptic POLO box 2 (CPB2) domain. The POLO box domain maps to 669 to 748 (PIKRITVPEI…MPQLQMKLKC (80 aa)).

The protein belongs to the protein kinase superfamily. Ser/Thr protein kinase family. CDC5/Polo subfamily. In terms of assembly, homodimer. Ubiquitinated by the SCF(Slimb) ubiquitin ligase complex; leading to its degradation by the proteasome during interphase and regulating centriole number and ensuring the block to centriole reduplication.

It localises to the cytoplasm. Its subcellular location is the cytoskeleton. The protein resides in the microtubule organizing center. The protein localises to the centrosome. It is found in the centriole. It carries out the reaction L-seryl-[protein] + ATP = O-phospho-L-seryl-[protein] + ADP + H(+). The catalysed reaction is L-threonyl-[protein] + ATP = O-phospho-L-threonyl-[protein] + ADP + H(+). Functionally, serine/threonine-protein kinase that plays a central role in centriole duplication. Able to trigger procentriole formation on the surface of the mother centriole cylinder, using mother centriole as a platform, leading to the recruitment of centriole biogenesis proteins such as sas-6. When overexpressed, it is able to induce centrosome amplification through the simultaneous generation of multiple procentrioles adjoining each parental centriole during S phase. Centrosome amplification following overexpression can initiate tumorigenesis, highlighting the importance of centrosome regulation in cancers. The sequence is that of Serine/threonine-protein kinase PLK4 (SAK) from Drosophila persimilis (Fruit fly).